Consider the following 227-residue polypeptide: PKHD-type hydroxylase Mfla_2317 (227 aa).

A Fe2OG dioxygenase domain is found at Lys-78–Ser-178. Fe cation is bound by residues His-96, Asp-98, and His-159. Arg-169 is a binding site for 2-oxoglutarate.

The cofactor is Fe(2+). It depends on L-ascorbate as a cofactor.

This Methylobacillus flagellatus (strain ATCC 51484 / DSM 6875 / VKM B-1610 / KT) protein is PKHD-type hydroxylase Mfla_2317.